Consider the following 291-residue polypeptide: 2-C-methyl-D-erythritol 4-phosphate cytidylyltransferase (291 aa).

Positions 1–23 are disordered; that stretch reads MTERDFDTPVETPTVQPAPAQGT.

This sequence belongs to the IspD/TarI cytidylyltransferase family. IspD subfamily.

It catalyses the reaction 2-C-methyl-D-erythritol 4-phosphate + CTP + H(+) = 4-CDP-2-C-methyl-D-erythritol + diphosphate. It functions in the pathway isoprenoid biosynthesis; isopentenyl diphosphate biosynthesis via DXP pathway; isopentenyl diphosphate from 1-deoxy-D-xylulose 5-phosphate: step 2/6. Its function is as follows. Catalyzes the formation of 4-diphosphocytidyl-2-C-methyl-D-erythritol from CTP and 2-C-methyl-D-erythritol 4-phosphate (MEP). The polypeptide is 2-C-methyl-D-erythritol 4-phosphate cytidylyltransferase (Bifidobacterium longum subsp. infantis (strain ATCC 15697 / DSM 20088 / JCM 1222 / NCTC 11817 / S12)).